The sequence spans 48 residues: MPQLVPFYFLNQLTYGFLLLIILLVLFSQFLLPRILRLYISRLFISKL.

A helical membrane pass occupies residues 13-33; sequence LTYGFLLLIILLVLFSQFLLP.

The protein belongs to the ATPase protein 8 family. In terms of assembly, F-type ATPases have 2 components, CF(1) - the catalytic core - and CF(0) - the membrane proton channel.

The protein resides in the mitochondrion membrane. Its function is as follows. Mitochondrial membrane ATP synthase (F(1)F(0) ATP synthase or Complex V) produces ATP from ADP in the presence of a proton gradient across the membrane which is generated by electron transport complexes of the respiratory chain. F-type ATPases consist of two structural domains, F(1) - containing the extramembraneous catalytic core and F(0) - containing the membrane proton channel, linked together by a central stalk and a peripheral stalk. During catalysis, ATP synthesis in the catalytic domain of F(1) is coupled via a rotary mechanism of the central stalk subunits to proton translocation. Part of the complex F(0) domain. Minor subunit located with subunit a in the membrane. This chain is ATP synthase protein 8 (ATP8), found in Wickerhamomyces canadensis (Yeast).